The sequence spans 309 residues: Putative taste receptor type 2 member 33 (309 aa).

A topological domain (extracellular) is located at residue M1. The helical transmembrane segment at 2-22 (VYFLPIIFSILVVFAFVLGNF) threads the bilayer. Residues 23 to 46 (SNGFIALVNVIDWVKRQKISSADQ) lie on the Cytoplasmic side of the membrane. A helical membrane pass occupies residues 47–67 (ILTALVVSRVGLLWVILLHWY). The Extracellular segment spans residues 68–86 (ANVFNSALYSLEVRIVASN). N86 carries an N-linked (GlcNAc...) asparagine glycan. Residues 87-107 (ISAVINHFSIWLAASLSIFYL) form a helical membrane-spanning segment. Residues 108–127 (LKIANFSNLIFLHLKKRIKS) lie on the Cytoplasmic side of the membrane. The chain crosses the membrane as a helical span at residues 128-148 (VVLVILLGPLVFLICNLAVIT). Residues 149–181 (MDERVWTKEYEGNVTWKIKLRNAIHLSSLTVTT) are Extracellular-facing. N161 carries N-linked (GlcNAc...) asparagine glycosylation. Residues 182 to 202 (LANLIPFTLSLICFLLLICSL) form a helical membrane-spanning segment. At 203–229 (CKHLKKMQLHSKGSQDPSTKVHIKALQ) the chain is on the cytoplasmic side. The helical transmembrane segment at 230–250 (TVISFLMLCAIYFLSIMISVW) threads the bilayer. Residues 251-259 (NLRSLENKP) lie on the Extracellular side of the membrane. A helical membrane pass occupies residues 260–280 (VFMFCKAIRFSYPSIHPFILI). At 281-309 (WGNKKLKQTFLSVFWQVRYWVKGEKPSSP) the chain is on the cytoplasmic side.

Belongs to the G-protein coupled receptor T2R family.

The protein localises to the membrane. In terms of biological role, putative taste receptor which may play a role in the perception of bitterness. The chain is Putative taste receptor type 2 member 33 from Homo sapiens (Human).